A 92-amino-acid chain; its full sequence is UPF0473 protein BCE33L4129 (92 aa).

The protein belongs to the UPF0473 family.

This is UPF0473 protein BCE33L4129 from Bacillus cereus (strain ZK / E33L).